A 66-amino-acid chain; its full sequence is Large ribosomal subunit protein uL29 (66 aa).

Belongs to the universal ribosomal protein uL29 family.

This is Large ribosomal subunit protein uL29 from Rhizobium etli (strain ATCC 51251 / DSM 11541 / JCM 21823 / NBRC 15573 / CFN 42).